The sequence spans 101 residues: Small ribosomal subunit protein uS14 (101 aa).

This sequence belongs to the universal ribosomal protein uS14 family. As to quaternary structure, part of the 30S ribosomal subunit. Contacts proteins S3 and S10.

In terms of biological role, binds 16S rRNA, required for the assembly of 30S particles and may also be responsible for determining the conformation of the 16S rRNA at the A site. The chain is Small ribosomal subunit protein uS14 from Caulobacter sp. (strain K31).